The sequence spans 298 residues: Aquaporin NIP2-1 (298 aa).

N-linked (GlcNAc...) asparagine glycans are attached at residues Asn4, Asn13, and Asn26. Helical transmembrane passes span 51–71 and 85–105; these read VVSE…AAGI and SIAG…ISGA. The short motif at 108 to 110 is the NPA 1 element; that stretch reads NPA. 3 consecutive transmembrane segments (helical) span residues 124 to 144, 166 to 186, and 194 to 214; these read IQVP…SFVL, SLVV…AVAT, and LAGL…GAIS. The NPA 2 motif lies at 219–221; sequence NPA. A helical transmembrane segment spans residues 237 to 257; it reads WIYFLGPVMGTLSGAWTYTFI.

It belongs to the MIP/aquaporin (TC 1.A.8) family. NIP (TC 1.A.8.12) subfamily. Mainly expressed in the roots. In roots, it localizes in the main and lateral roots, but not in root hairs. Within a root, it localizes on the plasma membrane of the distal side of both exodermis and endodermis, where casparian strips exist (at protein level). Expressed low levels in leaves and anthers.

It localises to the cell membrane. Functionally, silicon influx transporter responsible for silicon transport from the external solution to the root cells. Is coupled with the silicon efflux transporter LSI2 in both exodermal and endodermal root cells for an efficient silicon transport across the cells into the stele. Silicon is beneficial to plant growth and helps plants to overcome abiotic and biotic stresses by preventing lodging (falling over) and increasing resistance to pests and diseases, as well as other stresses. Is coupled with LSI2 transporter in roots for efficient uptake of arsenite, which is further dispatched in shoots and grains. Mediates uptake of methylated arsenic species in roots. In Oryza sativa subsp. japonica (Rice), this protein is Aquaporin NIP2-1.